Reading from the N-terminus, the 299-residue chain is uncharacterized protein (299 aa).

This is an uncharacterized protein from Bacillus subtilis (strain 168).